A 259-amino-acid polypeptide reads, in one-letter code: Gasdermin bGSDM (259 aa).

Cys-3 carries the S-palmitoyl cysteine lipid modification. A run of 4 beta stranded transmembrane segments spans residues 70-86, 98-116, 162-179, and 187-203; these read FQFR…AASV, SGSF…IQLS, GIRI…DLSA, and AKAK…SYAF. Residues 244 to 259 are C-terminal region; the sequence is PFAFIGDDAFVDLPES.

It belongs to the bacterial gasdermin family. Monomer in solution. In terms of assembly, forms large, homooligomeric ring-shaped pores when inserted in membranes. Palmitoylation helps stabilize the inactive state; may self palmitoylate. Palmitoylation plays a significant role in pore formation.

It is found in the cytoplasm. It localises to the cell inner membrane. Its activity is regulated as follows. The full-length protein before cleavage is inactive: intramolecular interactions between the N-terminal domain and the C-terminal region as well as the lipid modification, mediate autoinhibition. The pyroptosis-like-inducing activity is carried by the released N-terminal domain (Gasdermin bGSDM, N-terminus). Functionally, precursor of a pore-forming protein involved in defense against bacteriophages. Expression of bGSDM and the neighboring protease gene (Ga0098714_109514) is toxic in E.coli on solid medium. Cleavage of this precursor by its dedicated protease releases the active moiety (gasdermin bGSDM, N-terminus) which inserts into membranes, forming pores and triggering cell death. In terms of biological role, pore-forming protein that causes membrane permeabilization via a pyroptosis-like activity. Makes ring-like pores when released. This Bradyrhizobium tropiciagri protein is Gasdermin bGSDM.